The following is a 454-amino-acid chain: Histidine--tRNA ligase (454 aa).

This sequence belongs to the class-II aminoacyl-tRNA synthetase family. Homodimer.

The protein resides in the cytoplasm. The enzyme catalyses tRNA(His) + L-histidine + ATP = L-histidyl-tRNA(His) + AMP + diphosphate + H(+). In Porphyromonas gingivalis (strain ATCC BAA-308 / W83), this protein is Histidine--tRNA ligase.